The sequence spans 185 residues: Ribosome-recycling factor (185 aa).

The protein belongs to the RRF family.

It is found in the cytoplasm. Its function is as follows. Responsible for the release of ribosomes from messenger RNA at the termination of protein biosynthesis. May increase the efficiency of translation by recycling ribosomes from one round of translation to another. This chain is Ribosome-recycling factor, found in Clostridium perfringens (strain ATCC 13124 / DSM 756 / JCM 1290 / NCIMB 6125 / NCTC 8237 / Type A).